The primary structure comprises 137 residues: Transcription antitermination protein NusB (137 aa).

Belongs to the NusB family.

Involved in transcription antitermination. Required for transcription of ribosomal RNA (rRNA) genes. Binds specifically to the boxA antiterminator sequence of the ribosomal RNA (rrn) operons. The sequence is that of Transcription antitermination protein NusB from Borreliella afzelii (strain PKo) (Borrelia afzelii).